The sequence spans 168 residues: Photosystem I assembly protein Ycf3 (168 aa).

TPR repeat units follow at residues 35–68 (AFTYYRDGMSAQSEGNYAEALQNYYEAMRLEIDP), 72–105 (SYILYNIGLIHTSNGEHTKALEYYFRALERNPFL), and 120–153 (GEQAIRQGDSEVAESWFNQAAEYWKQAIALTPGN).

Belongs to the Ycf3 family.

It localises to the plastid. The protein resides in the chloroplast thylakoid membrane. Its function is as follows. Essential for the assembly of the photosystem I (PSI) complex. May act as a chaperone-like factor to guide the assembly of the PSI subunits. The sequence is that of Photosystem I assembly protein Ycf3 from Phaseolus vulgaris (Kidney bean).